A 552-amino-acid polypeptide reads, in one-letter code: Glutamine--tRNA ligase (552 aa).

Positions 34–44 match the 'HIGH' region motif; sequence PEPNGYLHIGH. Residues 35 to 37 and 41 to 47 each bind ATP; these read EPN and HIGHAKS. L-glutamine contacts are provided by Asp-67 and Tyr-212. ATP is bound by residues Thr-231, 261 to 262, and 269 to 271; these read RL and MSK. The short motif at 268–272 is the 'KMSKS' region element; that stretch reads VMSKR.

Belongs to the class-I aminoacyl-tRNA synthetase family. Monomer.

The protein localises to the cytoplasm. It catalyses the reaction tRNA(Gln) + L-glutamine + ATP = L-glutaminyl-tRNA(Gln) + AMP + diphosphate. The protein is Glutamine--tRNA ligase of Aliivibrio fischeri (strain MJ11) (Vibrio fischeri).